The chain runs to 160 residues: M-phase phosphoprotein 6 (160 aa).

Glycyl lysine isopeptide (Lys-Gly) (interchain with G-Cter in SUMO2) cross-links involve residues K37 and K86. Position 110 is a phosphoserine (S110). The short motif at 116–133 (RRYETLVGTIGKKFARKR) is the Nuclear localization signal element. Residue K127 forms a Glycyl lysine isopeptide (Lys-Gly) (interchain with G-Cter in SUMO2) linkage. A Phosphothreonine modification is found at T147. Glycyl lysine isopeptide (Lys-Gly) (interchain with G-Cter in SUMO2) cross-links involve residues K150 and K153.

Belongs to the MPP6 family. As to quaternary structure, associates with the RNA exosome complex, mediated by EXOSC3. Interacts with ARHGAP18. Interacts with exosome cofactors EXOSC10 and MTREX. Phosphorylated in M (mitotic) phase.

Its subcellular location is the nucleus. It localises to the nucleolus. It is found in the cytoplasm. Its function is as follows. RNA-binding protein that associates with the RNA exosome complex. Involved in the 3'-processing of the 7S pre-RNA to the mature 5.8S rRNA and play a role in recruiting the RNA exosome complex to pre-rRNA; this function may include C1D. The protein is M-phase phosphoprotein 6 of Homo sapiens (Human).